A 177-amino-acid chain; its full sequence is Thymidine kinase (177 aa).

An ATP-binding site is contributed by 11–18 (GPMFSGKS). Residue glutamate 83 is the Proton acceptor of the active site. Phenylalanine 113 serves as a coordination point for substrate. Zn(2+) is bound by residues cysteine 138 and cysteine 141. 157-161 (IEIIG) provides a ligand contact to substrate. Zn(2+) contacts are provided by cysteine 170 and cysteine 173.

The protein belongs to the thymidine kinase family. Homotetramer. Two molecules of substrate bind to each enzyme tetramer.

It catalyses the reaction thymidine + ATP = dTMP + ADP + H(+). Phosphorylates thymidine and thymidine analogs, such as azidothymidine (AZT). Part of the salvage pathway for pyrimidine deoxyribonucleotide synthesis. This is Thymidine kinase (OPG101) from Vaccinia virus (strain Copenhagen) (VACV).